Consider the following 80-residue polypeptide: Protein CEBPZOS (80 aa).

The helical transmembrane segment at 15 to 31 threads the bilayer; sequence GVLAAELVGVAGAYCLF.

It localises to the mitochondrion membrane. The chain is Protein CEBPZOS from Mus musculus (Mouse).